The chain runs to 484 residues: Schwannomin-interacting protein 1 (484 aa).

The segment covering 1-28 (MERSEQRVRAAWDCDPGKQADRDYREDG) has biased composition (basic and acidic residues). Disordered regions lie at residues 1–74 (MERS…VSAL), 86–220 (KKVI…PPMD), 232–258 (QFREQEVRNQGQARTNSTSAQKNERES), and 305–350 (SGSD…ESLD). Over residues 33–67 (SDAGSSSSSRASSQSNSTKVTPCSECKSSSSPGGS) the composition is skewed to low complexity. Over residues 92–106 (WAPEEDGEEEEEEDD) the composition is skewed to acidic residues. Basic and acidic residues predominate over residues 107–120 (RGYRDDGCPAREPG). Positions 123–137 (SARIGSSGSGSRSAA) are enriched in low complexity. The span at 150 to 159 (HPHDPQDLRH) shows a compositional bias: basic and acidic residues. Polar residues predominate over residues 239–252 (RNQGQARTNSTSAQ). The segment covering 306 to 320 (GSDKDSDADDSKTET) has biased composition (basic and acidic residues). Over residues 321–332 (SLDTPLSPMSKQ) the composition is skewed to polar residues. Acidic residues predominate over residues 341 to 350 (TTEEESESLD). Residues 421-455 (IGQLQVIVNDLHSQIESLNEELVQLLLIRDELHTE) adopt a coiled-coil conformation.

Belongs to the SCHIP1 family. In terms of assembly, homooligomer (via coiled coil domain). Interacts with NF2; the interaction is direct. Interacts with ANK3.

The polypeptide is Schwannomin-interacting protein 1 (Mus musculus (Mouse)).